Consider the following 407-residue polypeptide: Phosphopentomutase (407 aa).

Aspartate 10, aspartate 306, histidine 311, aspartate 347, histidine 348, and histidine 359 together coordinate Mn(2+).

This sequence belongs to the phosphopentomutase family. It depends on Mn(2+) as a cofactor.

The protein resides in the cytoplasm. It catalyses the reaction 2-deoxy-alpha-D-ribose 1-phosphate = 2-deoxy-D-ribose 5-phosphate. The enzyme catalyses alpha-D-ribose 1-phosphate = D-ribose 5-phosphate. It functions in the pathway carbohydrate degradation; 2-deoxy-D-ribose 1-phosphate degradation; D-glyceraldehyde 3-phosphate and acetaldehyde from 2-deoxy-alpha-D-ribose 1-phosphate: step 1/2. Its function is as follows. Isomerase that catalyzes the conversion of deoxy-ribose 1-phosphate (dRib-1-P) and ribose 1-phosphate (Rib-1-P) to deoxy-ribose 5-phosphate (dRib-5-P) and ribose 5-phosphate (Rib-5-P), respectively. This Enterobacter sp. (strain 638) protein is Phosphopentomutase.